Here is a 91-residue protein sequence, read N- to C-terminus: Large ribosomal subunit protein uL23 (91 aa).

This sequence belongs to the universal ribosomal protein uL23 family. In terms of assembly, part of the 50S ribosomal subunit. Contacts protein L29.

Binds to 23S rRNA. One of the proteins that surrounds the polypeptide exit tunnel on the outside of the ribosome. This chain is Large ribosomal subunit protein uL23, found in Staphylothermus marinus (strain ATCC 43588 / DSM 3639 / JCM 9404 / F1).